Consider the following 467-residue polypeptide: Cysteine--tRNA ligase (467 aa).

Residue cysteine 29 participates in Zn(2+) binding. The 'HIGH' region motif lies at 31–41; the sequence is PTVYNYVHIGN. Zn(2+) contacts are provided by cysteine 209, histidine 234, and glutamate 238. The 'KMSKS' region motif lies at 267–271; it reads KMSKS. Lysine 270 serves as a coordination point for ATP.

Belongs to the class-I aminoacyl-tRNA synthetase family. In terms of assembly, monomer. The cofactor is Zn(2+).

It is found in the cytoplasm. The catalysed reaction is tRNA(Cys) + L-cysteine + ATP = L-cysteinyl-tRNA(Cys) + AMP + diphosphate. This chain is Cysteine--tRNA ligase, found in Xylella fastidiosa (strain 9a5c).